The chain runs to 235 residues: Small ribosomal subunit protein uS2c (235 aa).

The protein belongs to the universal ribosomal protein uS2 family.

The protein resides in the plastid. Its subcellular location is the chloroplast. The protein is Small ribosomal subunit protein uS2c (rps2) of Zygnema circumcarinatum (Green alga).